The following is a 250-amino-acid chain: Ribosomal RNA small subunit methyltransferase J (250 aa).

S-adenosyl-L-methionine contacts are provided by residues 101–102 (RD), 117–118 (ER), 153–154 (SS), and aspartate 171.

The protein belongs to the methyltransferase superfamily. RsmJ family.

Its subcellular location is the cytoplasm. It catalyses the reaction guanosine(1516) in 16S rRNA + S-adenosyl-L-methionine = N(2)-methylguanosine(1516) in 16S rRNA + S-adenosyl-L-homocysteine + H(+). Functionally, specifically methylates the guanosine in position 1516 of 16S rRNA. The chain is Ribosomal RNA small subunit methyltransferase J from Cronobacter sakazakii (strain ATCC BAA-894) (Enterobacter sakazakii).